Reading from the N-terminus, the 79-residue chain is MRALLIIAGLALFLVVCNASQVNEQRKLNEMLSVMFAVEEPQERDDCLGMFSSCNPDNDKCCEGRKCDRRDQWCKWNPW.

The N-terminal stretch at M1–A19 is a signal peptide. The propeptide occupies S20–R44. 3 disulfides stabilise this stretch: C47/C62, C54/C67, and C61/C74.

Belongs to the neurotoxin 10 (Hwtx-1) family. 34 (Jztx-26) subfamily. Expressed by the venom gland.

Its subcellular location is the secreted. Functionally, probable ion channel inhibitor. The protein is U16-theraphotoxin-Cg1a of Chilobrachys guangxiensis (Chinese earth tiger tarantula).